We begin with the raw amino-acid sequence, 297 residues long: tRNA dimethylallyltransferase (297 aa).

10–17 (APTGAGKT) contacts ATP. 12–17 (TGAGKT) provides a ligand contact to substrate. The interaction with substrate tRNA stretch occupies residues 34-37 (DSRQ).

The protein belongs to the IPP transferase family. As to quaternary structure, monomer. Requires Mg(2+) as cofactor.

The enzyme catalyses adenosine(37) in tRNA + dimethylallyl diphosphate = N(6)-dimethylallyladenosine(37) in tRNA + diphosphate. Catalyzes the transfer of a dimethylallyl group onto the adenine at position 37 in tRNAs that read codons beginning with uridine, leading to the formation of N6-(dimethylallyl)adenosine (i(6)A). This is tRNA dimethylallyltransferase from Leptospira interrogans serogroup Icterohaemorrhagiae serovar Lai (strain 56601).